We begin with the raw amino-acid sequence, 305 residues long: ATP synthase gamma chain (305 aa).

Belongs to the ATPase gamma chain family. As to quaternary structure, F-type ATPases have 2 components, CF(1) - the catalytic core - and CF(0) - the membrane proton channel. CF(1) has five subunits: alpha(3), beta(3), gamma(1), delta(1), epsilon(1). CF(0) has three main subunits: a, b and c.

It is found in the cell membrane. In terms of biological role, produces ATP from ADP in the presence of a proton gradient across the membrane. The gamma chain is believed to be important in regulating ATPase activity and the flow of protons through the CF(0) complex. In Streptomyces avermitilis (strain ATCC 31267 / DSM 46492 / JCM 5070 / NBRC 14893 / NCIMB 12804 / NRRL 8165 / MA-4680), this protein is ATP synthase gamma chain.